The following is a 606-amino-acid chain: Zinc finger protein 652 (606 aa).

At Ser57 the chain carries Phosphoserine. Over residues 71–97 the composition is skewed to basic and acidic residues; it reads HLHETEEQPYFRETRAVSDVHAVKEDR. 2 disordered regions span residues 71-113 and 130-235; these read HLHE…VSYK and VSKG…APVQ. The span at 98-109 shows a compositional bias: acidic residues; sequence ENSDDTEEEEEE. A Phosphoserine modification is found at Ser100. Thr103 carries the phosphothreonine modification. Positions 137–149 are enriched in polar residues; sequence VSSQSKETPVLKT. A compositionally biased stretch (acidic residues) spans 152–170; it reads EEEEEESEEEATDDSNDYG. Residues 171–183 show a composition bias toward basic and acidic residues; sequence ENEKQKKKEKIVE. Residues 184 to 209 are compositionally biased toward low complexity; that stretch reads KVSVTQRRTRRAASVAAATTSPTPRT. Phosphoserine occurs at positions 197 and 204. A C2H2-type 1 zinc finger spans residues 245–268; that stretch reads LTCEKCPRVFNTRWYLEKHMNVTH. A C2H2-type 2; degenerate zinc finger spans residues 272–294; that stretch reads QICDKCGKKFVLESELSLHQQTD. 6 C2H2-type zinc fingers span residues 299–322, 329–351, 357–379, 385–407, 413–435, and 441–463; these read IQCV…KIVH, FSCE…MVAH, FTCE…SLQH, FRCE…MSIH, FMCQ…MKTH, and FICE…RRTH. A C2H2-type 9; degenerate zinc finger spans residues 469 to 492; the sequence is YPCDVCGQRFRFSNMLKAHKEKCF. Residues 498 to 606 are mediates interaction with CBFA2T3; the sequence is VNVPPAVQIP…AEKNSSAQHH (109 aa).

The protein belongs to the krueppel C2H2-type zinc-finger protein family. Interacts with CBFA2T3. Widely expressed with higher expression in breast, prostate, vulva and pancreas.

It localises to the nucleus. Functions as a transcriptional repressor. The chain is Zinc finger protein 652 (ZNF652) from Homo sapiens (Human).